Reading from the N-terminus, the 88-residue chain is UPF0250 protein Sputcn32_2874 (88 aa).

Belongs to the UPF0250 family.

This chain is UPF0250 protein Sputcn32_2874, found in Shewanella putrefaciens (strain CN-32 / ATCC BAA-453).